The primary structure comprises 596 residues: Sensor protein ChvG (596 aa).

Residues 1–22 (MLKKTPETVSDSDDAEERGSER) form a disordered region. The Cytoplasmic portion of the chain corresponds to 1–47 (MLKKTPETVSDSDDAEERGSERRHRIHPLTIIRRIFGNAVFSSLTRR). Residues 48–68 (ILFFNVAATVVLVGGILYLNQ) form a helical membrane-spanning segment. The Periplasmic segment spans residues 69-283 (FREGLIDARV…VHAERLAIMR (215 aa)). A helical membrane pass occupies residues 284–304 (VFGIATLVNIVLSLLLSSTIA). Residues 301-356 (STIATPLRRLSAAAIRVRRGARTREEIPDFSARQDEIGNLSIALREMTTALYDRID) form the HAMP domain. Residues 305 to 596 (TPLRRLSAAA…SLPAAETHER (292 aa)) are Cytoplasmic-facing. A Histidine kinase domain is found at 364–592 (DVSHELKNPL…RFTLSLPAAE (229 aa)). Position 367 is a phosphohistidine (histidine 367).

It localises to the cell inner membrane. It catalyses the reaction ATP + protein L-histidine = ADP + protein N-phospho-L-histidine.. Member of a two-component regulatory system ChvG/ChvI. Activates ChvI by phosphorylation (Potential). This chain is Sensor protein ChvG (chvG), found in Agrobacterium fabrum (strain C58 / ATCC 33970) (Agrobacterium tumefaciens (strain C58)).